The sequence spans 831 residues: Multiphosphoryl transfer protein (831 aa).

Residues methionine 1–serine 90 enclose the HPr domain. The active-site Pros-phosphohistidine intermediate; for HPr activity is the histidine 15. Histidine 15 carries the post-translational modification Phosphohistidine; by EI. The tract at residues glycine 119 to aspartate 650 is PTS EI. Histidine 298 (tele-phosphohistidine intermediate; for PTS EI activity) is an active-site residue. A Phosphohistidine; by autocatalysis modification is found at histidine 298. Residues arginine 405 and arginine 441 each contribute to the phosphoenolpyruvate site. Positions 540 and 564 each coordinate Mg(2+). Residues asparagine 563–aspartate 564 and arginine 574 each bind phosphoenolpyruvate. Cysteine 611 acts as the Proton donor; for EI activity in catalysis. The PTS EIIA type-2 domain occupies proline 685–glutamate 828. Catalysis depends on histidine 747, which acts as the Tele-phosphohistidine intermediate; for PTS EIIA activity. Phosphohistidine; by HPr is present on histidine 747.

The protein belongs to the PEP-utilizing enzyme family. It depends on Mg(2+) as a cofactor.

The protein localises to the cytoplasm. It carries out the reaction L-histidyl-[protein] + phosphoenolpyruvate = N(pros)-phospho-L-histidyl-[protein] + pyruvate. The catalysed reaction is D-fructose(out) + N(pros)-phospho-L-histidyl-[protein] = D-fructose 1-phosphate(in) + L-histidyl-[protein]. Multifunctional protein that includes general (non sugar-specific) and sugar-specific components of the phosphoenolpyruvate-dependent sugar phosphotransferase system (sugar PTS). This major carbohydrate active transport system catalyzes the phosphorylation of incoming sugar substrates concomitantly with their translocation across the cell membrane. The enzyme II FryABC PTS system is involved in fructose transport. The protein is Multiphosphoryl transfer protein (fryA) of Escherichia coli O6:H1 (strain CFT073 / ATCC 700928 / UPEC).